Consider the following 892-residue polypeptide: E3 ubiquitin ligase PQT3-like (892 aa).

The region spanning 3 to 76 (IYYKFKSARD…NTSVLIRRVP (74 aa)) is the DWNN domain. The CCHC-type zinc finger occupies 210 to 224 (CHRCNIPGHFIQHCP). Serine 285 bears the Phosphoserine mark. An RING-type; degenerate zinc finger spans residues 295–333 (CPLCKEVMKDAALTSKCCYKSFCDKCIRDHIISKSMCVC). Disordered regions lie at residues 375–408 (DLES…NNND), 459–493 (TQAP…MQWN), and 623–892 (MLRK…RSRA). Position 404 is a phosphoserine (serine 404). Residues 623 to 644 (MLRKRENERRPEGGKMFRDGEN) are compositionally biased toward basic and acidic residues. Over residues 647 to 666 (MMMNNGTSASASSINPNKSR) the composition is skewed to polar residues. Residues 674–692 (HDYDRRRRPEKRLSPEHPP) are compositionally biased toward basic and acidic residues. A Nuclear localization signal motif is present at residues 693–700 (TRKNISPS). Residues 708-745 (ERYPDERDRQRDRERSRHQDVDREHDRTRDRRDEDRSR) show a composition bias toward basic and acidic residues. Low complexity predominate over residues 810 to 832 (SSSSTSVTDPSASASAAAAVGTS). The residue at position 866 (serine 866) is a Phosphoserine. Basic and acidic residues predominate over residues 875–892 (SEDKLRYSKRGKGERSRA).

Its subcellular location is the nucleus. It catalyses the reaction S-ubiquitinyl-[E2 ubiquitin-conjugating enzyme]-L-cysteine + [acceptor protein]-L-lysine = [E2 ubiquitin-conjugating enzyme]-L-cysteine + N(6)-ubiquitinyl-[acceptor protein]-L-lysine.. The polypeptide is E3 ubiquitin ligase PQT3-like (Arabidopsis thaliana (Mouse-ear cress)).